A 418-amino-acid chain; its full sequence is ML-236A carboxylate methylbutanoyltransferase mlcH (418 aa).

Arginine 78 contributes to the monacolin J binding site. The active-site Acyl-ester intermediate is the serine 81. The monacolin J site is built by arginine 178, tyrosine 193, and tyrosine 262. 2-methylbutanoate is bound at residue glycine 370.

This sequence belongs to the class-A beta-lactamase family.

It catalyses the reaction ML-236A carboxylate + (S)-2-methylbutanoyl-[2-methylbutanoate polyketide synthase] = mevinic carboxylate + holo-[2-methylbutanoate polyketide synthase]. Its pathway is polyketide biosynthesis. Compactin diketide synthase; part of the gene cluster that mediates the biosynthesis of compactin, also known as mevastatin or ML-236B, and which acts as a potent competitive inhibitor of HMG-CoA reductase. Compactin biosynthesis is performed in two stages. The first stage is catalyzed by the nonaketide synthase mlcA, which belongs to type I polyketide synthases and catalyzes the iterative nine-step formation of the polyketide. This PKS stage is completed by the action of dehydrogenase mlcG, which catalyzes the NADPH-dependent reduction of the unsaturated tetra-, penta- and heptaketide intermediates that arise during the mlcA-mediated biosynthesis of the nonaketide chain and leads to dihydro-ML-236C carboxylate. Covalently bound dihydro-ML-236C carboxylate is released from mlcA by the mlcF esterase. Conversion of dihydro-ML-236C carboxylate into ML-236A carboxylate is subsequently performed with the participation of molecular oxygen and P450 monoogygenase mlcC. Finally, mlcH performs the conversion of ML-236A carboxylate to ML-236B/compactin carboxylate through the addition of the side-chain diketide moiety produced by the diketide synthase mlcB. This is ML-236A carboxylate methylbutanoyltransferase mlcH from Penicillium citrinum.